The following is a 121-amino-acid chain: Large ribosomal subunit protein bL12 (121 aa).

Belongs to the bacterial ribosomal protein bL12 family. Homodimer. Part of the ribosomal stalk of the 50S ribosomal subunit. Forms a multimeric L10(L12)X complex, where L10 forms an elongated spine to which 2 to 4 L12 dimers bind in a sequential fashion. Binds GTP-bound translation factors.

Its function is as follows. Forms part of the ribosomal stalk which helps the ribosome interact with GTP-bound translation factors. Is thus essential for accurate translation. This is Large ribosomal subunit protein bL12 from Xanthomonas campestris pv. campestris (strain B100).